We begin with the raw amino-acid sequence, 157 residues long: Protein MG115 (157 aa).

Belongs to the CinA family.

This is Protein MG115 from Mycoplasma genitalium (strain ATCC 33530 / DSM 19775 / NCTC 10195 / G37) (Mycoplasmoides genitalium).